The sequence spans 406 residues: Imidazolonepropionase (406 aa).

Fe(3+)-binding residues include His-75 and His-77. His-75 and His-77 together coordinate Zn(2+). Residues Arg-84, Tyr-147, and His-180 each coordinate 4-imidazolone-5-propanoate. Tyr-147 is an N-formimidoyl-L-glutamate binding site. His-245 contacts Fe(3+). His-245 contacts Zn(2+). Residue Gln-248 coordinates 4-imidazolone-5-propanoate. Asp-320 serves as a coordination point for Fe(3+). Asp-320 contributes to the Zn(2+) binding site. Residues Asn-322 and Gly-324 each coordinate N-formimidoyl-L-glutamate. Position 325 (Thr-325) interacts with 4-imidazolone-5-propanoate.

It belongs to the metallo-dependent hydrolases superfamily. HutI family. It depends on Zn(2+) as a cofactor. Requires Fe(3+) as cofactor.

It is found in the cytoplasm. It carries out the reaction 4-imidazolone-5-propanoate + H2O = N-formimidoyl-L-glutamate. The protein operates within amino-acid degradation; L-histidine degradation into L-glutamate; N-formimidoyl-L-glutamate from L-histidine: step 3/3. Functionally, catalyzes the hydrolytic cleavage of the carbon-nitrogen bond in imidazolone-5-propanoate to yield N-formimidoyl-L-glutamate. It is the third step in the universal histidine degradation pathway. This Hyphomonas neptunium (strain ATCC 15444) protein is Imidazolonepropionase.